Here is a 111-residue protein sequence, read N- to C-terminus: uncharacterized protein (111 aa).

Residues 3 to 29 adopt a coiled-coil conformation; sequence RKITSYKTSLQGLREENEDVELMNLNL. Residues 6-111 enclose the PPM-type phosphatase domain; it reads TSYKTSLQGL…TWWMYCSSYY (106 aa).

This is an uncharacterized protein from Acanthamoeba polyphaga mimivirus (APMV).